Reading from the N-terminus, the 346-residue chain is Tripartite motif-containing protein 44 (346 aa).

Positions 68–167 are disordered; it reads TPPASGGDDA…ETEAESEFDP (100 aa). A compositionally biased stretch (acidic residues) spans 89-167; the sequence is EGEVESEVGE…ETEAESEFDP (79 aa). A B box-type zinc finger spans residues 176-217; that stretch reads VAKRKCPDHGLDLSTYCQEDRQLICVLCPVIGAHRGHQLSTL. Zn(2+) is bound by residues C181, H184, C203, and H209. A coiled-coil region spans residues 292-327; sequence AHVTEILADIQSHMDRLMTQMAQAKEQLDTSNESAE. Residues 313–346 form a disordered region; that stretch reads AQAKEQLDTSNESAEPKAEGDEEGPSGASEEEDT. Acidic residues predominate over residues 332 to 346; the sequence is GDEEGPSGASEEEDT. A phosphoserine mark is found at S338 and S341.

In terms of assembly, interacts (via coiled coil) with TRIM17 (via coiled coil). In terms of tissue distribution, expressed mainly in brain with high level in cerebral hemispheres and cerebellum. Lower expression in kidney, lung and spleen. In brain is detected in the hippocampus, thalamic and pretectal nuclei, substantia nigra, the dorsal part of the medulla, the cerebellum, in the olfactory nucleus, other cortical areas apart from hippocampus and the striatum. Indeed expression is confined in neuronal somata namely in the CA3 region and dentate gyrus of the hippocampus, caudate-putamen, parabranchial nucleus, olfactory nucleus, cortex, deep cerebellar nuclei and thalamus. Also highly expressed in the spleen. thymus and testis.

In terms of biological role, may play a role in the process of differentiation and maturation of neuronal cells. May regulate the activity of TRIM17. Is a negative regulator of PAX6 expression. This chain is Tripartite motif-containing protein 44 (Trim44), found in Mus musculus (Mouse).